A 213-amino-acid chain; its full sequence is ATP synthase peripheral stalk subunit OSCP, mitochondrial (213 aa).

The N-terminal 23 residues, 1-23, are a transit peptide targeting the mitochondrion; sequence MASQAVSGLSRQVRCFSTSVVRP. The SIFI-degron motif lies at 5-23; the sequence is AVSGLSRQVRCFSTSVVRP. 4 positions are modified to N6-acetyllysine: Lys54, Lys60, Lys70, and Lys73. Lys90 bears the N6-succinyllysine mark. N6-acetyllysine; alternate occurs at positions 100, 158, and 162. 3 positions are modified to N6-succinyllysine; alternate: Lys100, Lys158, and Lys162. 3 positions are modified to N6-acetyllysine: Lys172, Lys176, and Lys192. Residue Lys199 is modified to N6-succinyllysine.

This sequence belongs to the ATPase delta chain family. As to quaternary structure, component of the ATP synthase complex composed at least of ATP5F1A/subunit alpha, ATP5F1B/subunit beta, ATP5MC1/subunit c (homooctomer), MT-ATP6/subunit a, MT-ATP8/subunit 8, ATP5ME/subunit e, ATP5MF/subunit f, ATP5MG/subunit g, ATP5MK/subunit k, ATP5MJ/subunit j, ATP5F1C/subunit gamma, ATP5F1D/subunit delta, ATP5F1E/subunit epsilon, ATP5PF/subunit F6, ATP5PB/subunit b, ATP5PD/subunit d, ATP5PO/subunit OSCP. ATP synthase complex consists of a soluble F(1) head domain (subunits alpha(3) and beta(3)) - the catalytic core - and a membrane F(0) domain - the membrane proton channel (subunits c, a, 8, e, f, g, k and j). These two domains are linked by a central stalk (subunits gamma, delta, and epsilon) rotating inside the F1 region and a stationary peripheral stalk (subunits F6, b, d, and OSCP). Acetylation at Lys-162 decreases ATP production. Deacetylated by SIRT3. Post-translationally, in response to mitochondrial stress, the precursor protein is ubiquitinated by the SIFI complex in the cytoplasm before mitochondrial import, leading to its degradation. Within the SIFI complex, UBR4 initiates ubiquitin chain that are further elongated or branched by KCMF1.

The protein localises to the mitochondrion. The protein resides in the mitochondrion inner membrane. Functionally, subunit OSCP, of the mitochondrial membrane ATP synthase complex (F(1)F(0) ATP synthase or Complex V) that produces ATP from ADP in the presence of a proton gradient across the membrane which is generated by electron transport complexes of the respiratory chain. ATP synthase complex consist of a soluble F(1) head domain - the catalytic core - and a membrane F(1) domain - the membrane proton channel. These two domains are linked by a central stalk rotating inside the F(1) region and a stationary peripheral stalk. During catalysis, ATP synthesis in the catalytic domain of F(1) is coupled via a rotary mechanism of the central stalk subunits to proton translocation. In vivo, can only synthesize ATP although its ATP hydrolase activity can be activated artificially in vitro. Part of the complex F(0) domain. Part of the complex F(0) domain and the peripheric stalk, which acts as a stator to hold the catalytic alpha(3)beta(3) subcomplex and subunit a/ATP6 static relative to the rotary elements. The polypeptide is ATP synthase peripheral stalk subunit OSCP, mitochondrial (Sus scrofa (Pig)).